The primary structure comprises 480 residues: Bifunctional protein GlmU (480 aa).

The segment at 1–247 (MATPIDVVIM…AAQVAGVNSP (247 aa)) is pyrophosphorylase. UDP-N-acetyl-alpha-D-glucosamine contacts are provided by residues Lys24, Gln86, 91–92 (GT), 113–115 (SGD), Gly150, Glu172, and Asn245. A Mg(2+)-binding site is contributed by Asp115. Position 245 (Asn245) interacts with Mg(2+). The tract at residues 248-268 (VQLAELERVYQLRQATALMEQ) is linker. The tract at residues 269-480 (GVRLADPARF…WKRPVKVSKG (212 aa)) is N-acetyltransferase. Positions 355 and 373 each coordinate UDP-N-acetyl-alpha-D-glucosamine. His385 functions as the Proton acceptor in the catalytic mechanism. 2 residues coordinate UDP-N-acetyl-alpha-D-glucosamine: Tyr388 and Asn399. Residues Ala402, 408-409 (NY), Ser427, Gly445, and Arg462 contribute to the acetyl-CoA site.

In the N-terminal section; belongs to the N-acetylglucosamine-1-phosphate uridyltransferase family. It in the C-terminal section; belongs to the transferase hexapeptide repeat family. Homotrimer. Mg(2+) is required as a cofactor.

It localises to the cytoplasm. It carries out the reaction alpha-D-glucosamine 1-phosphate + acetyl-CoA = N-acetyl-alpha-D-glucosamine 1-phosphate + CoA + H(+). The enzyme catalyses N-acetyl-alpha-D-glucosamine 1-phosphate + UTP + H(+) = UDP-N-acetyl-alpha-D-glucosamine + diphosphate. It participates in nucleotide-sugar biosynthesis; UDP-N-acetyl-alpha-D-glucosamine biosynthesis; N-acetyl-alpha-D-glucosamine 1-phosphate from alpha-D-glucosamine 6-phosphate (route II): step 2/2. It functions in the pathway nucleotide-sugar biosynthesis; UDP-N-acetyl-alpha-D-glucosamine biosynthesis; UDP-N-acetyl-alpha-D-glucosamine from N-acetyl-alpha-D-glucosamine 1-phosphate: step 1/1. The protein operates within bacterial outer membrane biogenesis; LPS lipid A biosynthesis. In terms of biological role, catalyzes the last two sequential reactions in the de novo biosynthetic pathway for UDP-N-acetylglucosamine (UDP-GlcNAc). The C-terminal domain catalyzes the transfer of acetyl group from acetyl coenzyme A to glucosamine-1-phosphate (GlcN-1-P) to produce N-acetylglucosamine-1-phosphate (GlcNAc-1-P), which is converted into UDP-GlcNAc by the transfer of uridine 5-monophosphate (from uridine 5-triphosphate), a reaction catalyzed by the N-terminal domain. In Polaromonas sp. (strain JS666 / ATCC BAA-500), this protein is Bifunctional protein GlmU.